The chain runs to 395 residues: Carbohydrate sulfotransferase 6 (395 aa).

At 1–5 (MWLPR) the chain is on the cytoplasmic side. Residues 6–26 (VSSTAVTALLLAQTFLLLFLV) traverse the membrane as a helical; Signal-anchor for type II membrane protein segment. At 27-395 (SRPGPSSPAG…ASSTASHPRN (369 aa)) the chain is on the lumenal side. 49-55 (WRSGSSF) is a 3'-phosphoadenylyl sulfate binding site. N-linked (GlcNAc...) asparagine glycosylation occurs at Asn116. A 3'-phosphoadenylyl sulfate-binding site is contributed by 202–210 (RDPRAVLRS). Asn229, Asn305, and Asn328 each carry an N-linked (GlcNAc...) asparagine glycan.

Belongs to the sulfotransferase 1 family. Gal/GlcNAc/GalNAc subfamily. As to expression, expressed in cornea. Mainly expressed in brain. Also expressed in spinal cord and trachea.

Its subcellular location is the golgi apparatus membrane. It catalyses the reaction 3'-phosphoadenylyl sulfate + keratan = adenosine 3',5'-bisphosphate + keratan 6'-sulfate.. Sulfotransferase that utilizes 3'-phospho-5'-adenylyl sulfate (PAPS) as sulfonate donor to catalyze the transfer of sulfate to position 6 of non-reducing N-acetylglucosamine (GlcNAc) residues of keratan. Cooperates with B4GALT4 galactosyltransferase and B3GNT7 N-acetylglucosaminyltransferase to construct and elongate the sulfated disaccharide unit [-&gt;3Galbeta1-&gt;4(6-sulfoGlcNAcbeta)1-&gt;] within keratan sulfate polymer. Involved in biosynthesis of keratan sulfate in cornea, with an impact on proteoglycan fibril organization and corneal transparency. Involved in sulfation of endothelial mucins such as GLYCAM1. This is Carbohydrate sulfotransferase 6 from Homo sapiens (Human).